The sequence spans 648 residues: Bifunctional protein TilS/HprT (648 aa).

An ATP-binding site is contributed by 29 to 34 (SGGPDS). Asp-627 is a Mg(2+) binding site.

In the N-terminal section; belongs to the tRNA(Ile)-lysidine synthase family. It in the C-terminal section; belongs to the purine/pyrimidine phosphoribosyltransferase family. Mg(2+) is required as a cofactor.

Its subcellular location is the cytoplasm. It catalyses the reaction IMP + diphosphate = hypoxanthine + 5-phospho-alpha-D-ribose 1-diphosphate. It carries out the reaction GMP + diphosphate = guanine + 5-phospho-alpha-D-ribose 1-diphosphate. The catalysed reaction is cytidine(34) in tRNA(Ile2) + L-lysine + ATP = lysidine(34) in tRNA(Ile2) + AMP + diphosphate + H(+). In terms of biological role, ligates lysine onto the cytidine present at position 34 of the AUA codon-specific tRNA(Ile) that contains the anticodon CAU, in an ATP-dependent manner. Cytidine is converted to lysidine, thus changing the amino acid specificity of the tRNA from methionine to isoleucine. The polypeptide is Bifunctional protein TilS/HprT (tilS/hprT) (Listeria innocua serovar 6a (strain ATCC BAA-680 / CLIP 11262)).